Consider the following 473-residue polypeptide: T-box transcription factor TBX6L (473 aa).

The segment at residues 43–217 is a DNA-binding region (T-box); sequence LWDKFSSIGT…NNPFAKGFRD (175 aa). The interval 342-361 is disordered; it reads RLNPQETHHNSRPKIQLQPP.

Exclusively expressed by ventral mesendoderm.

Its subcellular location is the nucleus. Functionally, probable transcriptional regulator involved in developmental processes. The sequence is that of T-box transcription factor TBX6L (tbx6l) from Danio rerio (Zebrafish).